The sequence spans 344 residues: DNA fragmentation factor subunit beta (344 aa).

The CIDE-N domain maps to 7 to 83 (QPKCVKLRAL…LLTAGETWHG (77 aa)).

As to quaternary structure, heterodimer of DFFA and DFFB. Interacts with H1-1.

It is found in the cytoplasm. The protein localises to the nucleus. With respect to regulation, inhibited by DFFA (DFF45). In terms of biological role, nuclease that induces DNA fragmentation and chromatin condensation during apoptosis. Degrades naked DNA and induces apoptotic morphology. The sequence is that of DNA fragmentation factor subunit beta (Dffb) from Mus musculus (Mouse).